The chain runs to 141 residues: HTH-type transcriptional repressor NsrR (141 aa).

One can recognise an HTH rrf2-type domain in the interval 2–129 (QLTSFTDYGL…DNYTLADLVE (128 aa)). Positions 28 to 51 (ISEVTEVYGVSRNHMVKIINQLSR) form a DNA-binding region, H-T-H motif. Residues cysteine 91, cysteine 96, and cysteine 102 each coordinate [2Fe-2S] cluster.

It depends on [2Fe-2S] cluster as a cofactor.

Its function is as follows. Nitric oxide-sensitive repressor of genes involved in protecting the cell against nitrosative stress. May require iron for activity. In Salmonella choleraesuis (strain SC-B67), this protein is HTH-type transcriptional repressor NsrR.